A 230-amino-acid chain; its full sequence is Fibrillarin-like rRNA/tRNA 2'-O-methyltransferase (230 aa).

Residues 87–88, 105–106, 130–131, and 150–153 each bind S-adenosyl-L-methionine; these read TT, EY, DA, and DVAQ.

In terms of assembly, interacts with nop5. Component of box C/D small ribonucleoprotein (sRNP) particles that contain rpl7ae, FlpA and nop5, plus a guide RNA.

Involved in pre-rRNA and tRNA processing. Utilizes the methyl donor S-adenosyl-L-methionine to catalyze the site-specific 2'-hydroxyl methylation of ribose moieties in rRNA and tRNA. Site specificity is provided by a guide RNA that base pairs with the substrate. Methylation occurs at a characteristic distance from the sequence involved in base pairing with the guide RNA. The chain is Fibrillarin-like rRNA/tRNA 2'-O-methyltransferase from Methanocaldococcus jannaschii (strain ATCC 43067 / DSM 2661 / JAL-1 / JCM 10045 / NBRC 100440) (Methanococcus jannaschii).